Here is a 148-residue protein sequence, read N- to C-terminus: Large ribosomal subunit protein bL9 (148 aa).

The segment at 46–65 (QLQQQNKHAEQEREQEIEDA) is disordered. Positions 52–65 (KHAEQEREQEIEDA) are enriched in basic and acidic residues.

It belongs to the bacterial ribosomal protein bL9 family.

In terms of biological role, binds to the 23S rRNA. This chain is Large ribosomal subunit protein bL9, found in Staphylococcus carnosus (strain TM300).